Reading from the N-terminus, the 369-residue chain is Erythronate-4-phosphate dehydrogenase (369 aa).

Ser45 and Thr66 together coordinate substrate. Asp146 contacts NAD(+). Residue Arg209 is part of the active site. Residue Asp233 coordinates NAD(+). Glu238 is an active-site residue. His255 functions as the Proton donor in the catalytic mechanism. Gly258 contacts NAD(+).

It belongs to the D-isomer specific 2-hydroxyacid dehydrogenase family. PdxB subfamily. In terms of assembly, homodimer.

It is found in the cytoplasm. The enzyme catalyses 4-phospho-D-erythronate + NAD(+) = (R)-3-hydroxy-2-oxo-4-phosphooxybutanoate + NADH + H(+). It functions in the pathway cofactor biosynthesis; pyridoxine 5'-phosphate biosynthesis; pyridoxine 5'-phosphate from D-erythrose 4-phosphate: step 2/5. Functionally, catalyzes the oxidation of erythronate-4-phosphate to 3-hydroxy-2-oxo-4-phosphonooxybutanoate. The polypeptide is Erythronate-4-phosphate dehydrogenase (Porphyromonas gingivalis (strain ATCC BAA-308 / W83)).